We begin with the raw amino-acid sequence, 338 residues long: Adenylosuccinate synthetase (338 aa).

Residues 12 to 18 (GDEGKGK) and 42 to 44 (GHT) each bind GTP. Asp13 functions as the Proton acceptor in the catalytic mechanism. The Mg(2+) site is built by Asp13 and Gly42. IMP-binding positions include 13 to 16 (DEGK), 40 to 43 (NAGH), Thr127, Arg141, Gln179, Thr194, and Arg256. The Proton donor role is filled by His43. 252 to 258 (TVTGRRR) provides a ligand contact to substrate. GTP contacts are provided by residues Arg258, 284–286 (CLD), and 324–326 (STG).

Belongs to the adenylosuccinate synthetase family. In terms of assembly, homodimer. Requires Mg(2+) as cofactor.

It is found in the cytoplasm. It catalyses the reaction IMP + L-aspartate + GTP = N(6)-(1,2-dicarboxyethyl)-AMP + GDP + phosphate + 2 H(+). It participates in purine metabolism; AMP biosynthesis via de novo pathway; AMP from IMP: step 1/2. In terms of biological role, plays an important role in the de novo pathway of purine nucleotide biosynthesis. Catalyzes the first committed step in the biosynthesis of AMP from IMP. This is Adenylosuccinate synthetase from Methanococcus maripaludis (strain DSM 14266 / JCM 13030 / NBRC 101832 / S2 / LL).